A 949-amino-acid polypeptide reads, in one-letter code: Translation initiation factor IF-2 (949 aa).

Disordered regions lie at residues 54-183, 217-288, and 305-357; these read FLKP…EAAP, LPAA…EVAL, and EVVA…EMQA. Basic and acidic residues-rich tracts occupy residues 67 to 92 and 101 to 164; these read DQEKPEEIEEKKEAPKSPKRGEERHI and IEAK…EEAA. Composition is skewed to low complexity over residues 165–183 and 217–228; these read RAAAAAPAAPVAAPAEAAP and LPAAAPAAPSAP. Basic and acidic residues-rich tracts occupy residues 235-288 and 330-339; these read PVEE…EVAL and KYQDNEDRLQ. Residues 445-619 form the tr-type G domain; it reads TRPPVITVMG…EMLNLQSNPT (175 aa). Residues 454-461 are G1; the sequence is GHVDHGKT. 454-461 is a binding site for GTP; the sequence is GHVDHGKT. Positions 479 to 483 are G2; that stretch reads GITQH. The tract at residues 501 to 504 is G3; that stretch reads DTPG. GTP-binding positions include 501 to 505 and 555 to 558; these read DTPGH and NKID. A G4 region spans residues 555–558; it reads NKID. The G5 stretch occupies residues 591 to 593; sequence SAK.

The protein belongs to the TRAFAC class translation factor GTPase superfamily. Classic translation factor GTPase family. IF-2 subfamily.

It is found in the cytoplasm. In terms of biological role, one of the essential components for the initiation of protein synthesis. Protects formylmethionyl-tRNA from spontaneous hydrolysis and promotes its binding to the 30S ribosomal subunits. Also involved in the hydrolysis of GTP during the formation of the 70S ribosomal complex. This chain is Translation initiation factor IF-2, found in Magnetococcus marinus (strain ATCC BAA-1437 / JCM 17883 / MC-1).